A 465-amino-acid chain; its full sequence is Keratin, type I cytoskeletal 13 (465 aa).

Residues 1-28 are compositionally biased toward polar residues; it reads MNFTSFSITQGSRPQPPSTRGFSGNSFK. The segment at 1–47 is disordered; sequence MNFTSFSITQGSRPQPPSTRGFSGNSFKSDLIPQSRRSHSVYGTPGS. The head stretch occupies residues 1 to 98; that stretch reads MNFTSFSITQ…SGGSDLLLGT (98 aa). The tract at residues 99 to 135 is coil 1A; sequence SGKEAMQNLNDRLASYLEKVRSLEERNRELEQKIREW. One can recognise an IF rod domain in the interval 100 to 412; that stretch reads GKEAMQNLND…ILLEGDEGKF (313 aa). The segment at 136 to 154 is linker 1; the sequence is YEKQGAGTKTKDFSHYFKI. Residues 155–246 form a coil 1B region; the sequence is IADLQKQIHD…KSHDEEMKAL (92 aa). The linker 12 stretch occupies residues 247-269; sequence RSQLGGQVNVEVDAAPAEDLTKK. The tract at residues 270 to 408 is coil 2; sequence LERMRQQYEQ…RTYRILLEGD (139 aa). The tail stretch occupies residues 409-465; that stretch reads EGKFQTSPHHPSIVTKQTETVVTPVVITNVKTVVEEIIDGKIVSKKEYPGPPEKLMI.

Belongs to the intermediate filament family. In terms of assembly, heterotetramer of two type I and two type II keratins. In terms of tissue distribution, expressed in skin.

In terms of biological role, type 1 keratin. May maintain oral mucosal cell homeostasis and tissue organization in response to mechanical stress. The sequence is that of Keratin, type I cytoskeletal 13 (KRT13) from Protopterus aethiopicus (Marbled lungfish).